The primary structure comprises 140 residues: uncharacterized protein (140 aa).

Positions 3–131 (RLDHIGIAVF…NGVLVELCEP (129 aa)) constitute a VOC domain. The a divalent metal cation site is built by His-6, Glu-53, His-77, and Glu-127.

This sequence belongs to the methylmalonyl-CoA epimerase family.

This is an uncharacterized protein from Bacillus subtilis (strain 168).